A 102-amino-acid chain; its full sequence is MSMTSPSPVTGGMVDGSVLVRMATKPPVIGLITVLFLLVIGACVYCCIRVFLAARLWRATPLGRATVAYQVLRTLGPQAGSHAPPTVGIATQEPYRTIYMPD.

Residues 28-48 (VIGLITVLFLLVIGACVYCCI) form a helical membrane-spanning segment.

Its subcellular location is the host membrane. This is Protein ORF28 (ORF28) from Homo sapiens (Human).